The following is a 77-amino-acid chain: DinI-like protein in retron Ec67 (77 aa).

The protein belongs to the DinI family.

The chain is DinI-like protein in retron Ec67 from Escherichia coli.